Reading from the N-terminus, the 783-residue chain is Transcription factor Sp3 (783 aa).

The segment covering 1 to 12 (MTAPEKPVKQEE) has biased composition (basic and acidic residues). A disordered region spans residues 1-55 (MTAPEKPVKQEEMAALDVDGGGGGGGHGEYLQQQQQQQQQHGNGAAAAAAQDTQP). Over residues 19–28 (DGGGGGGGHG) the composition is skewed to gly residues. A compositionally biased stretch (low complexity) spans 29 to 51 (EYLQQQQQQQQQHGNGAAAAAAQ). Ser72 bears the Phosphoserine mark. Residue Lys122 forms a Glycyl lysine isopeptide (Lys-Gly) (interchain with G-Cter in SUMO) linkage. The segment at 140 to 239 (QYVLPLQNLQ…IPQTGQVQVQ (100 aa)) is transactivation domain (Gln-rich). Positions 302-340 (GQAMDSSDNSERTGERVSPDVNETNADTDLFVPTSSSSQ) are disordered. The span at 310–319 (NSERTGERVS) shows a compositional bias: basic and acidic residues. Residues 322-340 (VNETNADTDLFVPTSSSSQ) are compositionally biased toward polar residues. The tract at residues 352–501 (QQNTNSLTTT…TPVQTLTLGQ (150 aa)) is transactivation domain (Gln-rich). The 9aaTAD motif lies at 463–471 (ITWQTFQVQ). A repressor domain region spans residues 536–622 (IQLHPGENAD…RGTNLGKKKQ (87 aa)). Lys553 carries the post-translational modification N6-acetyllysine; alternate. Lys553 participates in a covalent cross-link: Glycyl lysine isopeptide (Lys-Gly) (interchain with G-Cter in SUMO); alternate. Residue Lys553 forms a Glycyl lysine isopeptide (Lys-Gly) (interchain with G-Cter in SUMO1); alternate linkage. Lys553 is covalently cross-linked (Glycyl lysine isopeptide (Lys-Gly) (interchain with G-Cter in SUMO2); alternate). Phosphoserine occurs at positions 565 and 568. Lys595 is covalently cross-linked (Glycyl lysine isopeptide (Lys-Gly) (interchain with G-Cter in SUMO2)). The segment at 623 to 647 (HICHIPGCGKVYGKTSHLRAHLRWH) adopts a C2H2-type 1 zinc-finger fold. A Phosphoserine modification is found at Ser648. 2 consecutive C2H2-type zinc fingers follow at residues 653-677 (FICNWMFCGKRFTRSDELQRHRRTH) and 683-705 (FVCPECSKRFMRSDHLAKHIKTH).

The protein belongs to the Sp1 C2H2-type zinc-finger protein family. As to quaternary structure, interacts with HLTF; the interaction may be required for basal transcriptional activity of HLTF. Interacts with HDAC1; the interaction deacetylates SP3 and regulates its transcriptional activity. Interacts with HDAC2 (preferably the CK2-phosphorylated form); the interaction deacetylates SP3 and regulates its transcriptional activity. Ceramides can also regulate acetylation/deacetylation events through altering the interaction of HDAC with SP3. Interacts with MEIS2 isoform Meis2D and PBX1 isoform PBX1a. Acetylated by histone acetyltransferase p300, deacetylated by HDACs. Acetylation/deacetylation states regulate transcriptional activity. Acetylation appears to activate transcription. Alternate sumoylation and acetylation at Lys-553 also control transcriptional activity. In terms of processing, sumoylated on all isoforms. Sumoylated on 2 sites in longer isoforms with Lys-553 being the major site. Sumoylation at this site promotes nuclear localization to the nuclear periphery, nuclear dots and PML nuclear bodies. Sumoylation on Lys-553 represses the transactivation activity, except for the largest isoform which has little effect on transactivation. Alternate sumoylation and acetylation at Lys-553 also control transcriptional activity.

The protein resides in the nucleus. Its subcellular location is the PML body. Transcriptional factor that can act as an activator or repressor depending on isoform and/or post-translational modifications. Binds to GT and GC boxes promoter elements. Competes with SP1 for the GC-box promoters. Weak activator of transcription but can activate a number of genes involved in different processes such as cell-cycle regulation, hormone-induction and house-keeping. The protein is Transcription factor Sp3 (Sp3) of Mus musculus (Mouse).